Here is a 121-residue protein sequence, read N- to C-terminus: Small ribosomal subunit protein uS13 (121 aa).

The disordered stretch occupies residues 94 to 121; it reads RGLPVRGQSTKNNARTRKGPKRTVGAKR. A compositionally biased stretch (basic residues) spans 107 to 121; that stretch reads ARTRKGPKRTVGAKR.

Belongs to the universal ribosomal protein uS13 family. As to quaternary structure, part of the 30S ribosomal subunit. Forms a loose heterodimer with protein S19. Forms two bridges to the 50S subunit in the 70S ribosome.

Its function is as follows. Located at the top of the head of the 30S subunit, it contacts several helices of the 16S rRNA. In the 70S ribosome it contacts the 23S rRNA (bridge B1a) and protein L5 of the 50S subunit (bridge B1b), connecting the 2 subunits; these bridges are implicated in subunit movement. Contacts the tRNAs in the A and P-sites. This Natranaerobius thermophilus (strain ATCC BAA-1301 / DSM 18059 / JW/NM-WN-LF) protein is Small ribosomal subunit protein uS13.